We begin with the raw amino-acid sequence, 470 residues long: Glycine--tRNA ligase (470 aa).

Residues arginine 94 and glutamate 183 each contribute to the substrate site. ATP-binding positions include 215–217, 225–230, 298–299, and 342–345; these read RNE, FRMVEF, EI, and GCDR. 230-234 is a binding site for substrate; the sequence is FEQME. 338–342 is a substrate binding site; that stretch reads ETSSG.

It belongs to the class-II aminoacyl-tRNA synthetase family. Homodimer.

The protein localises to the cytoplasm. It catalyses the reaction tRNA(Gly) + glycine + ATP = glycyl-tRNA(Gly) + AMP + diphosphate. Catalyzes the attachment of glycine to tRNA(Gly). This Chlorobaculum tepidum (strain ATCC 49652 / DSM 12025 / NBRC 103806 / TLS) (Chlorobium tepidum) protein is Glycine--tRNA ligase.